A 268-amino-acid polypeptide reads, in one-letter code: Probable intron-encoded DNA endonuclease 1 (268 aa).

This sequence belongs to the LAGLIDADG endonuclease family.

The protein resides in the mitochondrion. In terms of biological role, mitochondrial DNA endonuclease involved in intron homing. The protein is Probable intron-encoded DNA endonuclease 1 (hegI1) of Mycosarcoma maydis (Corn smut fungus).